The sequence spans 211 residues: Molybdenum cofactor guanylyltransferase (211 aa).

GTP-binding positions include 12-14, lysine 25, asparagine 53, aspartate 71, and aspartate 101; that span reads LAG. Position 101 (aspartate 101) interacts with Mg(2+).

The protein belongs to the MobA family. As to quaternary structure, monomer. The cofactor is Mg(2+).

Its subcellular location is the cytoplasm. The enzyme catalyses Mo-molybdopterin + GTP + H(+) = Mo-molybdopterin guanine dinucleotide + diphosphate. Transfers a GMP moiety from GTP to Mo-molybdopterin (Mo-MPT) cofactor (Moco or molybdenum cofactor) to form Mo-molybdopterin guanine dinucleotide (Mo-MGD) cofactor. This is Molybdenum cofactor guanylyltransferase from Acidovorax ebreus (strain TPSY) (Diaphorobacter sp. (strain TPSY)).